The sequence spans 284 residues: MPRYAQLVMGPAGSGKSTYCSTMVQHCEALNRSVQVVNLDPAAEHFNYPVMADIRELIEVDDVMEDDSLRFGPNGGLVFCMEYFANNFDWLENCLGHVEDDYILFDCPGQIELYTHLPVMKQLVQQLEQWEFRVCGVFLVDSQFMVESFKFISGILAALSAMISLEIPQVNIMTKMDLLSKKAKKEIEKFLDPDMYSLLEDSTGDLRSQKFKKLTKPVCGLVDDYSMVRFLPYDQSDEESMNIVLQHIDFAIQYGEDLEFKEPKEHEEESSSMFDEYFQERQNE.

13–18 (GSGKST) lines the GTP pocket. Positions 72 to 74 (GPN) match the Gly-Pro-Asn (GPN)-loop; involved in dimer interface motif. 174–177 (TKMD) contributes to the GTP binding site. Residues 261–284 (KEPKEHEEESSSMFDEYFQERQNE) are disordered.

Belongs to the GPN-loop GTPase family. In terms of assembly, heterodimer with GPN1. Binds to RNA polymerase II (RNAPII). Interacts directly with subunits RPB4 and RPB7 and the CTD of RPB1.

In terms of biological role, small GTPase required for proper localization of RNA polymerase II (RNAPII). May act at an RNAP assembly step prior to nuclear import. The polypeptide is GPN-loop GTPase 3 (Rattus norvegicus (Rat)).